The chain runs to 259 residues: Glutamate 5-kinase (259 aa).

Lys18 contributes to the ATP binding site. Ser54, Asp141, and Asn153 together coordinate substrate. An ATP-binding site is contributed by 173–174 (SD).

This sequence belongs to the glutamate 5-kinase family.

It is found in the cytoplasm. It catalyses the reaction L-glutamate + ATP = L-glutamyl 5-phosphate + ADP. Its pathway is amino-acid biosynthesis; L-proline biosynthesis; L-glutamate 5-semialdehyde from L-glutamate: step 1/2. Functionally, catalyzes the transfer of a phosphate group to glutamate to form L-glutamate 5-phosphate. The protein is Glutamate 5-kinase of Clavibacter michiganensis subsp. michiganensis (strain NCPPB 382).